The following is a 183-amino-acid chain: Phosphopantetheine adenylyltransferase (183 aa).

Thr13 is a binding site for substrate. ATP contacts are provided by residues 13–14 (TF) and His21. Substrate-binding residues include Lys45, Leu81, and Arg95. Residues 96–98 (GLR), Glu106, and 131–137 (HQFISSR) contribute to the ATP site.

It belongs to the bacterial CoaD family. Homohexamer. Mg(2+) serves as cofactor.

It localises to the cytoplasm. It carries out the reaction (R)-4'-phosphopantetheine + ATP + H(+) = 3'-dephospho-CoA + diphosphate. It participates in cofactor biosynthesis; coenzyme A biosynthesis; CoA from (R)-pantothenate: step 4/5. In terms of biological role, reversibly transfers an adenylyl group from ATP to 4'-phosphopantetheine, yielding dephospho-CoA (dPCoA) and pyrophosphate. The polypeptide is Phosphopantetheine adenylyltransferase (Rhodospirillum centenum (strain ATCC 51521 / SW)).